Reading from the N-terminus, the 192-residue chain is Xanthine phosphoribosyltransferase (192 aa).

L20 and N27 together coordinate xanthine. Position 128–132 (128–132) interacts with 5-phospho-alpha-D-ribose 1-diphosphate; the sequence is ANGDA. K156 is a xanthine binding site.

The protein belongs to the purine/pyrimidine phosphoribosyltransferase family. Xpt subfamily. Homodimer.

The protein localises to the cytoplasm. It catalyses the reaction XMP + diphosphate = xanthine + 5-phospho-alpha-D-ribose 1-diphosphate. It participates in purine metabolism; XMP biosynthesis via salvage pathway; XMP from xanthine: step 1/1. Functionally, converts the preformed base xanthine, a product of nucleic acid breakdown, to xanthosine 5'-monophosphate (XMP), so it can be reused for RNA or DNA synthesis. In Staphylococcus aureus (strain MRSA252), this protein is Xanthine phosphoribosyltransferase.